The sequence spans 1455 residues: Membrane-associated guanylate kinase, WW and PDZ domain-containing protein 2 (1455 aa).

Residues 17 to 101 form the PDZ 1 domain; it reads ESVIGRNPEG…PLRLKCVKQG (85 aa). In terms of domain architecture, Guanylate kinase-like spans 109–283; that stretch reads RHYLNLRFQK…APVYSQPEEL (175 aa). A disordered region spans residues 205 to 306; the sequence is PGATPSAEGK…DNEEPDPLPD (102 aa). Over residues 241–252 the composition is skewed to low complexity; the sequence is VVNGNGVVVTPE. Positions 281–296 are enriched in basic and acidic residues; the sequence is EELKEQMDDTKPTKPE. 2 WW domains span residues 302 to 335 and 348 to 381; these read DPLPDNWEMAYTEKGEVYFIDHNTKTTSWLDPRL and NELPYGWEKIDDPIYGTYYVDHINRRTQFENPVL. An interaction with DDN region spans residues 302–381; that stretch reads DPLPDNWEMA…RRTQFENPVL (80 aa). Tyr362 bears the Phosphotyrosine mark. 2 consecutive PDZ domains span residues 426–510 and 605–683; these read STTL…CRGY and TLTI…HRGG. The residue at position 686 (Ser686) is a Phosphoserine. The PDZ 4 domain occupies 778-860; it reads DVHLRRMESG…NGQVNLTVRR (83 aa). Tyr827 bears the Phosphotyrosine mark. The interval 869 to 913 is disordered; the sequence is CPENGRSPGSVSTHHSSPRSDYATYTNSNHAAPSSNASPPEGFAS. Ser884 and Ser885 each carry phosphoserine. A compositionally biased stretch (low complexity) spans 895–908; sequence NSNHAAPSSNASPP. Residues 920 to 1010 enclose the PDZ 5 domain; the sequence is DVVIHRKENE…SVTLRIIPQE (91 aa). Positions 1011-1040 are enriched in polar residues; that stretch reads ELNSPTSAPSSEKQSPMAQQSPLAQQSPLA. The disordered stretch occupies residues 1011-1136; that stretch reads ELNSPTSAPS…PDTRQYPLSD (126 aa). Phosphoserine is present on Ser1014. Basic and acidic residues predominate over residues 1067 to 1083; sequence NSYRSEVKARQDVKPDI. The 83-residue stretch at 1147–1229 folds into the PDZ 6 domain; it reads TVDMEKGAKG…RVRLLLKRGT (83 aa). A disordered region spans residues 1231-1455; that stretch reads QVPEYDEPAP…LKPGASAASR (225 aa). Low complexity predominate over residues 1238–1249; the sequence is PAPWSSPAAAAP. Over residues 1287–1299 the composition is skewed to basic and acidic residues; that stretch reads DIKREHDVRKPKE. Low complexity-rich tracts occupy residues 1346–1363, 1399–1412, and 1422–1433; these read EARAPGLAAADAADAARA, ALEAEGRAGARAGP, and APARKAAVAPGP.

The protein belongs to the MAGUK family. As to quaternary structure, interacts (via its WW domains) with DRPLA. Interacts (via its second PDZ domain) with PTEN (via unphosphorylated C-terminus); this interaction diminishes the degradation rate of PTEN. Interacts (via guanylate kinase domain) with DLGAP1. Interacts (via the PDZ domains) with GRIN2A, GRID2 and NLGN1. Interacts with CTNND2, CTNNB1, MAGUIN-1, ACVR2A, SMAD2 and SMAD3. Part of a complex consisting of MAGI2/ARIP1, ACVR2A, ACVR1B and SMAD3. May interact with HTR2A. Interacts with IGSF9, RAPGEF2 and HTR4. Identified in a complex with ACTN4, CASK, IQGAP1, NPHS1, SPTAN1 and SPTBN1. Found in a complex, at least composed of KIDINS220, MAGI2, NTRK1 and RAPGEF2; the complex is mainly formed at late endosomes in a NGF-dependent manner. Interacts with RAPGEF2; the interaction occurs before or after nerve growth factor (NGF) stimulation. Interacts (via PDZ domain) with KIDINS220 (via C-terminal domain). Interacts with DDN. Interacts with DLL1. Found in a complex with IGSF9B and NLGN2; the interaction with IGSF9B is mediated via the PDZ 5 and PDZ 6 domains, while the interaction with NLGN2 is mediated via the WW1, WW2 and PDZ2 domains. Interacts (via PDZ 6 domain) with USH1G (via SAM domain); the interaction is triggered by phosphorylation of USH1G by CK2 and negatively regulates MAGI2-mediated endocytosis. In terms of tissue distribution, specifically expressed in brain.

It is found in the cytoplasm. Its subcellular location is the late endosome. The protein resides in the synapse. The protein localises to the synaptosome. It localises to the cell membrane. It is found in the cytoskeleton. Its subcellular location is the microtubule organizing center. The protein resides in the centrosome. The protein localises to the cell projection. It localises to the cilium. It is found in the centriole. Its subcellular location is the photoreceptor inner segment. The protein resides in the photoreceptor outer segment. Functionally, seems to act as a scaffold molecule at synaptic junctions by assembling neurotransmitter receptors and cell adhesion proteins. Plays a role in nerve growth factor (NGF)-induced recruitment of RAPGEF2 to late endosomes and neurite outgrowth. May play a role in regulating activin-mediated signaling in neuronal cells. Enhances the ability of PTEN to suppress AKT1 activation. Plays a role in receptor-mediated clathrin-dependent endocytosis which is required for ciliogenesis. The protein is Membrane-associated guanylate kinase, WW and PDZ domain-containing protein 2 (MAGI2) of Homo sapiens (Human).